The sequence spans 308 residues: Cyclin-D2-1 (308 aa).

Residues 286–308 are disordered; sequence EGLSYDSSSPPPPKRRKRSPPGT. The span at 298–308 shows a compositional bias: basic residues; the sequence is PKRRKRSPPGT.

The protein belongs to the cyclin family. Cyclin D subfamily.

This is Cyclin-D2-1 (CYCD2-1) from Oryza sativa subsp. japonica (Rice).